We begin with the raw amino-acid sequence, 139 residues long: Prefoldin subunit alpha (139 aa).

The protein belongs to the prefoldin subunit alpha family. In terms of assembly, heterohexamer of two alpha and four beta subunits.

Its subcellular location is the cytoplasm. Functionally, molecular chaperone capable of stabilizing a range of proteins. Seems to fulfill an ATP-independent, HSP70-like function in archaeal de novo protein folding. The sequence is that of Prefoldin subunit alpha from Picrophilus torridus (strain ATCC 700027 / DSM 9790 / JCM 10055 / NBRC 100828 / KAW 2/3).